The primary structure comprises 583 residues: MEQLDVEDWEYWGDEYLEEEPTYAIRPGTRVVKVERVPMMRGDLRTSGATSSSGPATSYIIRPSDKQPTVSSGGSQNGDSVCAVCGDGIAKLHYGVLACYGCKGFFRRTLTGKYRYACRFSNNCIVDKFQRNSCRYCRFQRCIQAGMDPKAVRPDRDQTGKQKVPRIKKKQIDEELLNHMMRLQGDDWSRKLPVETRILLMQLMSIEDKVVKGDNNMSAQNTAKDPKSISLREMFESKPALDGRRMEIGYEPFRMARTEELGVIAHRRAIAAVDWVDSLTEIADAVDTEDKVALVKSCYSPLTIFNFSARTAQNTKNPDILCLCSHSFVPRRLPPEFNETNHLSNFLIDRTLNELVAPLRKLNLKEEEIVPLKAIIILNPNAKGLSEHARHAISELRDKVQDMLFQIVKELHPIYSASSRFGNLLLLLPTITTLSGLMSENMHFCQALGGRASGDNLLAEMFGDRTFDDQLISSSISPPLFENPAEICLESISPPMSDRRFVRRVDVATQTNDDLLSSGPYLPHSNSCSSMLNAGYSPPMLSTSPFPLLDDNDSAFQNDISLTELNGCEEFFSQLMDQPIIDS.

Residues D43–N77 form a disordered region. Low complexity predominate over residues T46–S58. Positions K66 to N77 are enriched in polar residues. The nuclear receptor DNA-binding region spans D79–P154. 2 NR C4-type zinc fingers span residues C82–C102 and C118–C142. The region spanning E195 to D464 is the NR LBD domain.

It belongs to the nuclear hormone receptor family.

The protein localises to the nucleus. In terms of biological role, orphan nuclear receptor. This Caenorhabditis elegans protein is Nuclear hormone receptor family member nhr-31 (nhr-31).